The chain runs to 842 residues: Glycogen phosphorylase, muscle form (842 aa).

Ser-2 carries the post-translational modification N-acetylserine. The residue at position 15 (Ser-15) is a Phosphoserine; by PHK; in form phosphorylase A. 2 residues coordinate AMP: Asp-43 and Tyr-76. Tyr-204 and Tyr-227 each carry phosphotyrosine. 310–319 lines the AMP pocket; it reads RRFKSSKFGC. A Phosphoserine modification is found at Ser-430. Tyr-473 is subject to Phosphotyrosine. Position 514 is a phosphoserine (Ser-514). At Lys-681 the chain carries N6-(pyridoxal phosphate)lysine. Phosphoserine occurs at positions 747 and 748.

It belongs to the glycogen phosphorylase family. Homodimer. Homotetramer; to form the enzymatically active phosphorylase A. Requires pyridoxal 5'-phosphate as cofactor. Post-translationally, phosphorylation of Ser-15 converts phosphorylase B (unphosphorylated) to phosphorylase A.

It carries out the reaction [(1-&gt;4)-alpha-D-glucosyl](n) + phosphate = [(1-&gt;4)-alpha-D-glucosyl](n-1) + alpha-D-glucose 1-phosphate. Allosterically regulated through the non-covalent binding of metabolites, being activated by AMP and inhibited by ATP, ADP, and glucose-6-phosphate. The activity is also controlled by post-translational modifications including phosphorylation. Its function is as follows. Allosteric enzyme that catalyzes the rate-limiting step in glycogen catabolism, the phosphorolytic cleavage of glycogen to produce glucose-1-phosphate, and plays a central role in maintaining cellular and organismal glucose homeostasis. This is Glycogen phosphorylase, muscle form from Homo sapiens (Human).